The sequence spans 262 residues: E3 ubiquitin-protein ligase NEURL3 (262 aa).

Positions 17–173 constitute an NHR domain; sequence ALRFHAEAKG…TTKAIELLDP (157 aa). The RING-type zinc-finger motif lies at 202 to 241; the sequence is CAICFYHAANTRLVPCGHTYFCRYCAWRVFSDTAKCPVCR.

In terms of assembly, (Microbial infection) Interacts with hepatitis C virus protein E1; this interaction prevents E1 interaction with E2 and subsequently inhibits viral infection.

Its subcellular location is the cytoplasm. It catalyses the reaction S-ubiquitinyl-[E2 ubiquitin-conjugating enzyme]-L-cysteine + [acceptor protein]-L-lysine = [E2 ubiquitin-conjugating enzyme]-L-cysteine + N(6)-ubiquitinyl-[acceptor protein]-L-lysine.. The protein operates within protein modification; protein ubiquitination. Its function is as follows. E3 ubiquitin-protein ligase that plays a role in various biological processes such as lung development or innate immunity. Seems to utilize UBE2E1. Promotes innate antiviral response by catalyzing 'Lys-63'-linked ubiquitination of IRF7. Also inhibits hepatitis C virus assembly by directly binding to viral E1 envelope glycoprotein to disrupt its interaction with E2. Plays an essential role in TLR4-mediated activation of MAPK pathways by promoting 'Lys-48'-linked polyubiquitination of the phosphatase DUSP1/MKP1. The sequence is that of E3 ubiquitin-protein ligase NEURL3 (NEURL3) from Homo sapiens (Human).